A 1489-amino-acid chain; its full sequence is Sex-determining transformer protein 2 (1489 aa).

The signal sequence occupies residues 1-33 (MKLAFNKLLVASVVFTVLSFGLLLASLFTTTAT). The next 11 helical transmembrane spans lie at 454-474 (MIYF…AFAF), 489-509 (GFIT…ILID), 513-533 (LCYI…VTFI), 600-620 (YWFL…FFID), 622-642 (DVQK…FEEM), 749-769 (AVVV…LLFI), 931-951 (IFAA…FSIG), 958-978 (LAFA…VSLF), 986-1006 (YTNV…CDLA), 1041-1061 (VQIF…TAII), and 1066-1086 (AFFI…FNSL). Positions 1138–1288 (EFSIRPTENT…EQQEVTDDVA (151 aa)) are interaction with fem-3. Disordered stretches follow at residues 1143–1176 (PTEN…DPSM), 1233–1393 (LLRQ…YPPS), and 1412–1489 (RNLP…TPGL). 3 stretches are compositionally biased toward basic and acidic residues: residues 1275–1298 (DPAK…EVRK), 1326–1340 (VSRE…REPR), and 1423–1433 (RPRDWDQRRLV). Residues 1402–1423 (CEDVYWKYNERNLPDNVPMPPR) form an MX regulatory domain; required for tra-1 binding region. A compositionally biased stretch (pro residues) spans 1444-1456 (VPPPGRSAIPIPP). The span at 1460 to 1482 (RLRERRREQHLREQEARRNRPES) shows a compositional bias: basic and acidic residues.

As to quaternary structure, interacts with tra-1 and fem-3.

The protein resides in the membrane. Plays a major role in controlling sexual cell fates. Promotes female development in XX animals where it sequesters one or more of the FEM proteins to the membrane thereby freeing the tra-1 protein (a putative transcription factor) to enter the nucleus and promote female development. In XO animals it acts as a receptor for her-1 which prevents it from binding to FEM proteins thereby repressing the activity of tra-1. Negatively regulates male development when bound to fem-3 and is required together with tra-1 for promoting spermatogenesis. Also required for feminizing tra-3 activity. This Caenorhabditis briggsae protein is Sex-determining transformer protein 2.